The primary structure comprises 153 residues: Endoribonuclease YbeY (153 aa).

The Zn(2+) site is built by His116, His120, and His126.

This sequence belongs to the endoribonuclease YbeY family. Zn(2+) serves as cofactor.

The protein localises to the cytoplasm. Single strand-specific metallo-endoribonuclease involved in late-stage 70S ribosome quality control and in maturation of the 3' terminus of the 16S rRNA. This Paraburkholderia phymatum (strain DSM 17167 / CIP 108236 / LMG 21445 / STM815) (Burkholderia phymatum) protein is Endoribonuclease YbeY.